A 281-amino-acid polypeptide reads, in one-letter code: Nuclear transcription factor Y subunit nfya-2 (281 aa).

Disordered stretches follow at residues 1 to 27 (MNPRGNPSKMPTQIVLNRRPAAPARPQ) and 163 to 261 (REMR…VQEE). A Subunit association domain (SAD) motif is present at residues 150–173 (MVNPRQYKRIIKRREMRQKMEDSG). A compositionally biased stretch (basic and acidic residues) spans 166–188 (RQKMEDSGRLPLERQKYMHESRR). Positions 180–204 (QKYMHESRRQHALKRRRTGGRFDAN) form a DNA-binding region, NFYA/HAP2-type. Residues 189-198 (QHALKRRRTG) are compositionally biased toward basic residues. Low complexity predominate over residues 204–220 (NAEAAAASSEPSISSAA).

It belongs to the NFYA/HAP2 subunit family. As to quaternary structure, forms a heterotrimeric transcription factor complex (nfya-2-NF-Y complex) composed of nfya-2, nfyb-1 and nfyc-1. Interacts with the nfyb-1 and nfyc-1 dimer; the interaction is required for subsequent binding to the 5'-CCAAT-3' box motif in DNA. Does not interact with either nfyb-1 or nfyc-1 in their monomeric form. Highly expressed in certain parts of the gonads. Expressed in the spermatheca, intestine and in some neurons in the head. Not expressed in the intestine, the hypodermis, body wall muscle surrounding the pseudocoelomic space, secretory cells in the pharyngeal terminal bulb wall, in the small ganglia surrounding the pharynx and in the neurons running anteriorly to the sensory organs in the head.

It localises to the nucleus. Its function is as follows. Component of the sequence-specific heterotrimeric transcription factor (nfya-2-NF-Y) which specifically recognizes a 5'-CCAAT-3' box motif found in the promoters of its target genes to regulate their expression and control cellular identity in particular tissue types. In association with the components in the nfya-2-NF-Y complex, may repress the expression of the T-box transcription factor tbx-2 throughout larval development, which most likely restricts its expression to certain tissues. In Caenorhabditis elegans, this protein is Nuclear transcription factor Y subunit nfya-2.